We begin with the raw amino-acid sequence, 727 residues long: DNA topoisomerase 3 (727 aa).

Residues 3–136 form the Toprim domain; sequence KTVVLAEKPS…LKRLWISSVT (134 aa). Mg(2+) contacts are provided by E9 and D105. In terms of domain architecture, Topo IA-type catalytic spans 153 to 592; that stretch reads FENLYHSAVA…EMKEYAKQTI (440 aa). The segment at 187–192 is interaction with DNA; it reads SCGRVQ. The active-site O-(5'-phospho-DNA)-tyrosine intermediate is Y310. Residues 685–711 show a composition bias toward basic and acidic residues; it reads RRAKDKNSKASKRDVHSYMKKQNKDEP. Residues 685–713 form a disordered region; sequence RRAKDKNSKASKRDVHSYMKKQNKDEPIN.

The protein belongs to the type IA topoisomerase family. Mg(2+) is required as a cofactor.

The catalysed reaction is ATP-independent breakage of single-stranded DNA, followed by passage and rejoining.. Functionally, releases the supercoiling and torsional tension of DNA, which is introduced during the DNA replication and transcription, by transiently cleaving and rejoining one strand of the DNA duplex. Introduces a single-strand break via transesterification at a target site in duplex DNA. The scissile phosphodiester is attacked by the catalytic tyrosine of the enzyme, resulting in the formation of a DNA-(5'-phosphotyrosyl)-enzyme intermediate and the expulsion of a 3'-OH DNA strand. The free DNA strand then undergoes passage around the unbroken strand, thus removing DNA supercoils. Finally, in the religation step, the DNA 3'-OH attacks the covalent intermediate to expel the active-site tyrosine and restore the DNA phosphodiester backbone. The protein is DNA topoisomerase 3 of Bacillus licheniformis (strain ATCC 14580 / DSM 13 / JCM 2505 / CCUG 7422 / NBRC 12200 / NCIMB 9375 / NCTC 10341 / NRRL NRS-1264 / Gibson 46).